The sequence spans 433 residues: uncharacterized protein (433 aa).

The interval 1–126 is methylglyoxal synthase; the sequence is MAAHIALIAH…VIKLLGKTKT (126 aa). The 145-residue stretch at 1–145 folds into the MGS-like domain; it reads MAAHIALIAH…GQGNVERELD (145 aa). The active site involves D62. The 136-residue stretch at 127 to 262 folds into the DAGKc domain; it reads GHLIFNPVAG…VDTALCNDIP (136 aa).

In the N-terminal section; belongs to the methylglyoxal synthase family.

This is an uncharacterized protein from Synechocystis sp. (strain ATCC 27184 / PCC 6803 / Kazusa).